The primary structure comprises 673 residues: Protein-arginine deiminase type-2 (673 aa).

M1 carries the post-translational modification N-acetylmethionine. Residues D131, D133, D135, E139, N162, D164, D166, D174, D177, K179, D185, and D188 each contribute to the Ca(2+) site. Position 352 is a citrulline (R352). Residues E362, D397, F416, L419, and E420 each coordinate Ca(2+). The active-site Nucleophile is C655.

It belongs to the protein arginine deiminase family. As to quaternary structure, homodimer. Ca(2+) serves as cofactor. As to expression, expressed in various tissues including muscle, uterus, spinal cord, salivary gland and pancreas.

It localises to the cytoplasm. It catalyses the reaction L-arginyl-[protein] + H2O = L-citrullyl-[protein] + NH4(+). Functionally, catalyzes the deimination of arginine residues of proteins. In Mus musculus (Mouse), this protein is Protein-arginine deiminase type-2 (Padi2).